The chain runs to 735 residues: Disintegrin and metalloproteinase domain-containing protein 2 (735 aa).

A signal peptide spans 1-16; sequence MWRVLFLLSGLGGLRM. Residues 17 to 174 constitute a propeptide that is removed on maturation; that stretch reads DSNFDSLPVQ…FKLQSVEPQQ (158 aa). 2 N-linked (GlcNAc...) asparagine glycosylation sites follow: N122 and N220. The Extracellular portion of the chain corresponds to 175–686; that stretch reads DFAKYIEMHV…ENIYHSKPMR (512 aa). The Peptidase M12B domain occupies 178–375; that stretch reads KYIEMHVIVE…QKSQCLHNQP (198 aa). 4 cysteine pairs are disulfide-bonded: C287/C370, C329/C354, C331/C336, and C445/C465. 3 N-linked (GlcNAc...) asparagine glycosylation sites follow: N353, N459, and N566. The 90-residue stretch at 384–473 folds into the Disintegrin domain; that stretch reads QAVCGNAKLE…SCPENHYVQT (90 aa). In terms of domain architecture, EGF-like spans 612 to 645; that stretch reads LGYDCTTDKCNDRGVCNNKKHCHCSASYLPPDCS. 3 cysteine pairs are disulfide-bonded: C616-C627, C621-C633, and C635-C644. A helical membrane pass occupies residues 687 to 707; sequence WPFFLFIPFFIIFCVLIAIMV. Over 708–735 the chain is Cytoplasmic; the sequence is KVNFQRKKWRTEDYSSDEQPESESEPKG. S729 is subject to Phosphoserine.

Post-translationally, the prodomain and the metalloprotease domain are cleaved during the epididymal maturation of the spermatozoa. Expressed specifically in spermatogenic cells in the seminiferous cells. Not detected in fetal tissues.

Its subcellular location is the membrane. In terms of biological role, sperm surface membrane protein that may be involved in sperm-egg plasma membrane adhesion and fusion during fertilization. Could have a direct role in sperm-zona binding or migration of sperm from the uterus into the oviduct. Interactions with egg membrane could be mediated via binding between its disintegrin-like domain to one or more integrins receptors on the egg. This is a non catalytic metalloprotease-like protein. This is Disintegrin and metalloproteinase domain-containing protein 2 (ADAM2) from Homo sapiens (Human).